Consider the following 449-residue polypeptide: Aminopeptidase C (449 aa).

Residues Cys-70, His-364, and Asn-385 contribute to the active site.

This sequence belongs to the peptidase C1 family. As to quaternary structure, homohexamer.

It localises to the cytoplasm. The catalysed reaction is Inactivates bleomycin B2 (a cytotoxic glycometallopeptide) by hydrolysis of a carboxyamide bond of beta-aminoalanine, but also shows general aminopeptidase activity. The specificity varies somewhat with source, but amino acid arylamides of Met, Leu and Ala are preferred.. The polypeptide is Aminopeptidase C (pepC) (Lactobacillus helveticus (Lactobacillus suntoryeus)).